The sequence spans 268 residues: 4-hydroxy-tetrahydrodipicolinate reductase (268 aa).

NAD(+) contacts are provided by residues 10-15, aspartate 36, 99-101, and 123-126; these read GAGGRM, GTT, and APNM. Histidine 156 serves as the catalytic Proton donor/acceptor. Histidine 157 provides a ligand contact to (S)-2,3,4,5-tetrahydrodipicolinate. The active-site Proton donor is the lysine 160. 166–167 contributes to the (S)-2,3,4,5-tetrahydrodipicolinate binding site; the sequence is GT.

Belongs to the DapB family.

Its subcellular location is the cytoplasm. It catalyses the reaction (S)-2,3,4,5-tetrahydrodipicolinate + NAD(+) + H2O = (2S,4S)-4-hydroxy-2,3,4,5-tetrahydrodipicolinate + NADH + H(+). It carries out the reaction (S)-2,3,4,5-tetrahydrodipicolinate + NADP(+) + H2O = (2S,4S)-4-hydroxy-2,3,4,5-tetrahydrodipicolinate + NADPH + H(+). It functions in the pathway amino-acid biosynthesis; L-lysine biosynthesis via DAP pathway; (S)-tetrahydrodipicolinate from L-aspartate: step 4/4. Catalyzes the conversion of 4-hydroxy-tetrahydrodipicolinate (HTPA) to tetrahydrodipicolinate. The chain is 4-hydroxy-tetrahydrodipicolinate reductase from Dechloromonas aromatica (strain RCB).